A 362-amino-acid chain; its full sequence is C-C chemokine receptor type 10 (362 aa).

Topologically, residues 1-52 (MGTEATEQVSWGHYSGDEEDAYSAEPLPELCYKADVQAFSRAFQPSVSLTVA) are extracellular. The helical transmembrane segment at 53–68 (ALGLAGNGLVLATHLA) threads the bilayer. The Cytoplasmic segment spans residues 69–78 (ARRAARSPTS). The helical transmembrane segment at 79 to 99 (AHLLQLALADLLLALTLPFAA) threads the bilayer. Residues 100–114 (AGALQGWSLGSATCR) are Extracellular-facing. Cysteines 113 and 191 form a disulfide. The chain crosses the membrane as a helical span at residues 115–136 (TISGLYSASFHAGFLFLACISA). Over 137-159 (DRYVAIARALPAGPRPSTPGRAH) the chain is Cytoplasmic. A helical membrane pass occupies residues 160-179 (LVSVIVWLLSLLLALPALLF). The Extracellular portion of the chain corresponds to 180 to 203 (SQDGQREGQRRCRLIFPEGLTQTV). A helical membrane pass occupies residues 204–225 (KGASAVAQVALGFALPLGVMVA). The Cytoplasmic portion of the chain corresponds to 226-247 (CYALLGRTLLAARGPERRRALR). Residues 248 to 269 (VVVALVAAFVVLQLPYSLALLL) traverse the membrane as a helical segment. Residues 270–290 (DTADLLAARERSCPASKRKDV) lie on the Extracellular side of the membrane. The chain crosses the membrane as a helical span at residues 291–313 (ALLVTSGLALARCGLNPVLYAFL). The Cytoplasmic portion of the chain corresponds to 314–362 (GLRFRQDLRRLLRGGSCPSGPQPRRGCPRRPRLSSCSAPTETHSLSWDN). Positions 328-338 (GSCPSGPQPRR) are enriched in low complexity. The segment at 328–362 (GSCPSGPQPRRGCPRRPRLSSCSAPTETHSLSWDN) is disordered. Residues 351–362 (APTETHSLSWDN) show a composition bias toward polar residues.

This sequence belongs to the G-protein coupled receptor 1 family. In terms of tissue distribution, expressed at high levels in adult testis, small intestine, fetal lung, fetal kidney. Weaker expression was observed in many other adult tissues including spleen, thymus, lymph node, Peyer patches, colon, heart, ovary, peripheral blood lymphocytes, thyroid and spinal cord. Also expressed by melanocytes, dermal fibroblasts, dermal microvascular endothelial cells. Also detected in T-cells and in skin-derived Langerhans cells.

It is found in the cell membrane. Receptor for chemokines SCYA27 and SCYA28. Subsequently transduces a signal by increasing the intracellular calcium ions level and stimulates chemotaxis in a pre-B cell line. This chain is C-C chemokine receptor type 10 (CCR10), found in Homo sapiens (Human).